We begin with the raw amino-acid sequence, 180 residues long: Vacuolar ATPase assembly protein VMA22 (180 aa).

The stretch at 16–37 (QLLGDLEELEGKRTVLNARVEE) forms a coiled coil. Positions 92–101 (EEVGPREAGL) are enriched in basic and acidic residues. The interval 92 to 122 (EEVGPREAGLRRRKGPTKTPEPESSEAPQDP) is disordered. Positions 153–176 (SLQNRIDWGRSQLRGLQEKLKQLE) form a coiled coil.

As to quaternary structure, accessory component of the multisubunit proton-transporting vacuolar (V)-ATPase protein pump. As to expression, expressed throughout the brain.

It localises to the endosome. It is found in the lysosome. The protein resides in the endoplasmic reticulum-Golgi intermediate compartment. The protein localises to the cytoplasmic vesicle. Its subcellular location is the COPI-coated vesicle. It localises to the endoplasmic reticulum. Its function is as follows. Accessory component of the proton-transporting vacuolar (V)-ATPase protein pump involved in intracellular iron homeostasis. In aerobic conditions, required for intracellular iron homeostasis, thus triggering the activity of Fe(2+) prolyl hydroxylase (PHD) enzymes, and leading to HIF1A hydroxylation and subsequent proteasomal degradation. Necessary for endolysosomal acidification and lysosomal degradation. May be involved in Golgi homeostasis. The protein is Vacuolar ATPase assembly protein VMA22 of Homo sapiens (Human).